Here is a 305-residue protein sequence, read N- to C-terminus: UDP-3-O-acyl-N-acetylglucosamine deacetylase (305 aa).

Zn(2+)-binding residues include histidine 79, histidine 238, and aspartate 242. The Proton donor role is filled by histidine 265.

It belongs to the LpxC family. Zn(2+) serves as cofactor.

It carries out the reaction a UDP-3-O-[(3R)-3-hydroxyacyl]-N-acetyl-alpha-D-glucosamine + H2O = a UDP-3-O-[(3R)-3-hydroxyacyl]-alpha-D-glucosamine + acetate. It functions in the pathway glycolipid biosynthesis; lipid IV(A) biosynthesis; lipid IV(A) from (3R)-3-hydroxytetradecanoyl-[acyl-carrier-protein] and UDP-N-acetyl-alpha-D-glucosamine: step 2/6. Functionally, catalyzes the hydrolysis of UDP-3-O-myristoyl-N-acetylglucosamine to form UDP-3-O-myristoylglucosamine and acetate, the committed step in lipid A biosynthesis. This chain is UDP-3-O-acyl-N-acetylglucosamine deacetylase, found in Escherichia coli O45:K1 (strain S88 / ExPEC).